The sequence spans 103 residues: Pyrimidine/purine nucleoside phosphorylase (103 aa).

Belongs to the nucleoside phosphorylase PpnP family.

It carries out the reaction a purine D-ribonucleoside + phosphate = a purine nucleobase + alpha-D-ribose 1-phosphate. The catalysed reaction is adenosine + phosphate = alpha-D-ribose 1-phosphate + adenine. It catalyses the reaction cytidine + phosphate = cytosine + alpha-D-ribose 1-phosphate. The enzyme catalyses guanosine + phosphate = alpha-D-ribose 1-phosphate + guanine. It carries out the reaction inosine + phosphate = alpha-D-ribose 1-phosphate + hypoxanthine. The catalysed reaction is thymidine + phosphate = 2-deoxy-alpha-D-ribose 1-phosphate + thymine. It catalyses the reaction uridine + phosphate = alpha-D-ribose 1-phosphate + uracil. The enzyme catalyses xanthosine + phosphate = alpha-D-ribose 1-phosphate + xanthine. Its function is as follows. Catalyzes the phosphorolysis of diverse nucleosides, yielding D-ribose 1-phosphate and the respective free bases. Can use uridine, adenosine, guanosine, cytidine, thymidine, inosine and xanthosine as substrates. Also catalyzes the reverse reactions. This Shewanella sp. (strain MR-4) protein is Pyrimidine/purine nucleoside phosphorylase.